The chain runs to 120 residues: Crustacean hyperglycemic hormones 2 (120 aa).

The signal sequence occupies residues 1–27 (MIAFHMVWSALLASLLLLLLAPSASPV). 3 disulfide bridges follow: Cys-53/Cys-89, Cys-69/Cys-85, and Cys-72/Cys-98. At Val-118 the chain carries Valine amide.

This sequence belongs to the arthropod CHH/MIH/GIH/VIH hormone family.

Its subcellular location is the secreted. Functionally, hormone found in the sinus gland of isopods and decapods which controls the blood sugar level. Has a secretagogue action over the amylase released from the midgut gland. May act as a stress hormone and may be involved in the control of molting and reproduction. In Penaeus japonicus (Kuruma prawn), this protein is Crustacean hyperglycemic hormones 2.